A 481-amino-acid polypeptide reads, in one-letter code: Inosine-5'-monophosphate dehydrogenase (481 aa).

2 CBS domains span residues 92–148 (VIND…SKKV) and 152–209 (MTKM…PEAN). Residues D244 and 293-295 (GIG) contribute to the NAD(+) site. K(+) is bound by residues G295 and G297. An IMP-binding site is contributed by S298. A K(+)-binding site is contributed by C300. C300 acts as the Thioimidate intermediate in catalysis. IMP is bound by residues 333–335 (DGG), 356–357 (GS), and 380–384 (YRGMG). The Proton acceptor role is filled by R396. E410 provides a ligand contact to IMP. Residues E464, S465, and H466 each contribute to the K(+) site.

Belongs to the IMPDH/GMPR family. Homotetramer. Requires K(+) as cofactor.

It carries out the reaction IMP + NAD(+) + H2O = XMP + NADH + H(+). It functions in the pathway purine metabolism; XMP biosynthesis via de novo pathway; XMP from IMP: step 1/1. With respect to regulation, mycophenolic acid (MPA) is a non-competitive inhibitor that prevents formation of the closed enzyme conformation by binding to the same site as the amobile flap. In contrast, mizoribine monophosphate (MZP) is a competitive inhibitor that induces the closed conformation. MPA is a potent inhibitor of mammalian IMPDHs but a poor inhibitor of the bacterial enzymes. MZP is a more potent inhibitor of bacterial IMPDH. Its function is as follows. Catalyzes the conversion of inosine 5'-phosphate (IMP) to xanthosine 5'-phosphate (XMP), the first committed and rate-limiting step in the de novo synthesis of guanine nucleotides, and therefore plays an important role in the regulation of cell growth. The sequence is that of Inosine-5'-monophosphate dehydrogenase from Helicobacter pylori (strain ATCC 700392 / 26695) (Campylobacter pylori).